We begin with the raw amino-acid sequence, 329 residues long: Lipoyl synthase (329 aa).

[4Fe-4S] cluster-binding residues include cysteine 72, cysteine 77, cysteine 83, cysteine 98, cysteine 102, cysteine 105, and serine 313. The Radical SAM core domain maps to 83–303 (CWSHGTATIM…QIGLKKGFFE (221 aa)).

The protein belongs to the radical SAM superfamily. Lipoyl synthase family. [4Fe-4S] cluster is required as a cofactor.

It localises to the cytoplasm. It carries out the reaction [[Fe-S] cluster scaffold protein carrying a second [4Fe-4S](2+) cluster] + N(6)-octanoyl-L-lysyl-[protein] + 2 oxidized [2Fe-2S]-[ferredoxin] + 2 S-adenosyl-L-methionine + 4 H(+) = [[Fe-S] cluster scaffold protein] + N(6)-[(R)-dihydrolipoyl]-L-lysyl-[protein] + 4 Fe(3+) + 2 hydrogen sulfide + 2 5'-deoxyadenosine + 2 L-methionine + 2 reduced [2Fe-2S]-[ferredoxin]. The protein operates within protein modification; protein lipoylation via endogenous pathway; protein N(6)-(lipoyl)lysine from octanoyl-[acyl-carrier-protein]: step 2/2. Catalyzes the radical-mediated insertion of two sulfur atoms into the C-6 and C-8 positions of the octanoyl moiety bound to the lipoyl domains of lipoate-dependent enzymes, thereby converting the octanoylated domains into lipoylated derivatives. The protein is Lipoyl synthase of Legionella pneumophila (strain Paris).